Consider the following 793-residue polypeptide: RNA-binding protein spenito (793 aa).

Disordered stretches follow at residues 1–93 (MSSH…PPAE) and 243–296 (HHDY…KKDK). The span at 25 to 42 (SRSPGPASRSSLSRNSRS) shows a compositional bias: low complexity. A compositionally biased stretch (basic residues) spans 257-268 (RGGHPHHLHGHA). A compositionally biased stretch (basic and acidic residues) spans 285-296 (APYEKPESKKDK). RRM domains are found at residues 314–391 (RTLF…YGKV) and 395–469 (TRMW…FAEL). The disordered stretch occupies residues 507-623 (YAPRGGYSPY…RNDALASAST (117 aa)). Over residues 526 to 536 (GGYRGRGRGMY) the composition is skewed to basic residues. Basic and acidic residues predominate over residues 566–593 (DEWRRPPGESYDRGARSSSREPGVERSR). The SPOC domain occupies 624-791 (VPDVARKCST…HLVIVVVRGG (168 aa)).

This sequence belongs to the RRM Spen family. Component of the WMM complex, a N6-methyltransferase complex composed of a catalytic subcomplex, named MAC, and of an associated subcomplex, named MACOM. The MAC subcomplex is composed of Ime4/Mettl3 and Mettl14. The MACOM subcomplex is composed of fl(2)d, Flacc/Xio, Hakai, vir, and, in some cases of nito. Interacts with Sxl. Interacts with Hipk; leading to phosphorylation. Phosphorylated by Hipk at Ser-23, Ser-25 and/or Ser-27; the precise position if phosphorylation sites is unknown. As to expression, widely expressed. Shows some enrichment in the central nervous system.

It is found in the nucleus. Functionally, RNA-binding protein that acts as an associated component of the WMM complex, a complex that mediates N6-methyladenosine (m6A) methylation of mRNAs. M6a modification plays a role in the efficiency of mRNA splicing and is required for sex determination. In the WMM complex, may act by binding target RNAs and recruiting the WMM complex. Required for sex determination and dosage compensation via Sxl alternative splicing: m6A methylation acts as a key regulator of Sxl pre-mRNA and promotes female-specific alternative splicing of Sxl, which determines female physiognomy. M6A methylation is also required for neuronal functions. Acts as a positive regulator of canonical Wg signaling during wing disk and eye development. The polypeptide is RNA-binding protein spenito (Drosophila melanogaster (Fruit fly)).